We begin with the raw amino-acid sequence, 230 residues long: MDSKKHKIINGYYHKNCISCKSWLPATEENFYSVKKNKDGLHSYCKACVLKKAKESMLKNYDKQLERMRERNLLPGMKEAKKKYNSSLKKKKTQQIWQEKNKLKLKNYRLQRDAHKKHNITDVQWQKCKDYFNNKCSYCGLKIEDHKILFKGTYIQSDFHKEHVDHKGANDISNCIPACKSCNSSKHDFAFEEWYNSSNKNFSSERLLKIKEWLNRFKEERQDSEWRTKG.

The region spanning 136–188 is the HNH domain; the sequence is CSYCGLKIEDHKILFKGTYIQSDFHKEHVDHKGANDISNCIPACKSCNSSKHD.

The protein belongs to the HNH nuclease family.

In Bacillus subtilis (strain 168), this protein is SPbeta prophage-derived putative HNH endonuclease YoqL (yoqL).